The sequence spans 340 residues: Ketol-acid reductoisomerase (NADP(+)) (340 aa).

One can recognise a KARI N-terminal Rossmann domain in the interval 1-182 (MRVYYDRDCD…GGGRSGIIET (182 aa)). Residues 24–27 (YGSQ), arginine 48, serine 51, serine 53, and 83–86 (DELQ) contribute to the NADP(+) site. Residue histidine 108 is part of the active site. Residue glycine 134 coordinates NADP(+). A KARI C-terminal knotted domain is found at 183-329 (NFREECETDL…KELRGMMPWI (147 aa)). Positions 191, 195, 227, and 231 each coordinate Mg(2+). Serine 252 is a substrate binding site.

Belongs to the ketol-acid reductoisomerase family. Requires Mg(2+) as cofactor.

It catalyses the reaction (2R)-2,3-dihydroxy-3-methylbutanoate + NADP(+) = (2S)-2-acetolactate + NADPH + H(+). It carries out the reaction (2R,3R)-2,3-dihydroxy-3-methylpentanoate + NADP(+) = (S)-2-ethyl-2-hydroxy-3-oxobutanoate + NADPH + H(+). It participates in amino-acid biosynthesis; L-isoleucine biosynthesis; L-isoleucine from 2-oxobutanoate: step 2/4. Its pathway is amino-acid biosynthesis; L-valine biosynthesis; L-valine from pyruvate: step 2/4. Its function is as follows. Involved in the biosynthesis of branched-chain amino acids (BCAA). Catalyzes an alkyl-migration followed by a ketol-acid reduction of (S)-2-acetolactate (S2AL) to yield (R)-2,3-dihydroxy-isovalerate. In the isomerase reaction, S2AL is rearranged via a Mg-dependent methyl migration to produce 3-hydroxy-3-methyl-2-ketobutyrate (HMKB). In the reductase reaction, this 2-ketoacid undergoes a metal-dependent reduction by NADPH to yield (R)-2,3-dihydroxy-isovalerate. This Dinoroseobacter shibae (strain DSM 16493 / NCIMB 14021 / DFL 12) protein is Ketol-acid reductoisomerase (NADP(+)).